The following is a 149-amino-acid chain: Transcriptional repressor NrdR (149 aa).

A zinc finger spans residues 3–34 (CPFCTAKDTKVIDSRLVGGGHQVRRRRECNDC). Positions 49–139 (PRVIKQDGSR…VYRSFEDIRE (91 aa)) constitute an ATP-cone domain.

Belongs to the NrdR family. Zn(2+) is required as a cofactor.

In terms of biological role, negatively regulates transcription of bacterial ribonucleotide reductase nrd genes and operons by binding to NrdR-boxes. This is Transcriptional repressor NrdR from Pseudoalteromonas translucida (strain TAC 125).